The primary structure comprises 226 residues: MRKHIDIVFSRLSGPILNPPPDNNVIPKTDRKLRITEVILRFAVVIFALVSAIMVGTASGTRDLGGGIRIHAHFTLLKTLPFLVIVDGILAVYSLLQGLRCFLSLYMRHILLNKALAWTIFCCDQALAYVIFAAAASTAETAYISEQGLDELQWIKVCMFFRAYCFKSGAGMINAFLAALCMVFVSGMSVFHLFRLYGEKRAYGHIAEQVVISEEAAERRNSLNGI.

Residues 1–37 (MRKHIDIVFSRLSGPILNPPPDNNVIPKTDRKLRITE) are Cytoplasmic-facing. Residues 38 to 58 (VILRFAVVIFALVSAIMVGTA) form a helical membrane-spanning segment. Residues 59–78 (SGTRDLGGGIRIHAHFTLLK) lie on the Extracellular side of the membrane. A helical transmembrane segment spans residues 79–99 (TLPFLVIVDGILAVYSLLQGL). Residues 100–114 (RCFLSLYMRHILLNK) lie on the Cytoplasmic side of the membrane. The helical transmembrane segment at 115 to 135 (ALAWTIFCCDQALAYVIFAAA) threads the bilayer. Residues 136-170 (ASTAETAYISEQGLDELQWIKVCMFFRAYCFKSGA) are Extracellular-facing. A helical membrane pass occupies residues 171–191 (GMINAFLAALCMVFVSGMSVF). The Cytoplasmic portion of the chain corresponds to 192-226 (HLFRLYGEKRAYGHIAEQVVISEEAAERRNSLNGI).

Belongs to the Casparian strip membrane proteins (CASP) family. As to quaternary structure, homodimer and heterodimers.

It localises to the cell membrane. The sequence is that of CASP-like protein 2BC1 from Picea sitchensis (Sitka spruce).